The chain runs to 109 residues: Hainantoxin-XVIII.2 (109 aa).

Positions 1-18 (MKLSIIIIVTSLVIAVVA) are cleaved as a signal peptide. The propeptide occupies 19 to 46 (FPSKDSKAIENDKTEQRMEIVVQETARA). Disulfide bonds link cysteine 47–cysteine 62, cysteine 55–cysteine 68, cysteine 59–cysteine 108, and cysteine 61–cysteine 81.

It belongs to the neurotoxin 25 family. F7 subfamily. In terms of tissue distribution, expressed by the venom gland.

Its subcellular location is the secreted. Putative ion channel inhibitor. This is Hainantoxin-XVIII.2 from Cyriopagopus hainanus (Chinese bird spider).